Consider the following 348-residue polypeptide: Dihydroorotate dehydrogenase (quinone) (348 aa).

FMN is bound by residues 65 to 69 and Thr89; that span reads AGMDK. Residue Lys69 coordinates substrate. Residue 114–118 participates in substrate binding; that stretch reads NRMGF. Residues Asn143 and Asn176 each coordinate FMN. Substrate is bound at residue Asn176. The Nucleophile role is filled by Ser179. Position 181 (Asn181) interacts with substrate. 2 residues coordinate FMN: Lys221 and Thr249. Residue 250–251 participates in substrate binding; that stretch reads NT. Residues Gly272, Gly301, and 322–323 contribute to the FMN site; that span reads YT.

The protein belongs to the dihydroorotate dehydrogenase family. Type 2 subfamily. Monomer. Requires FMN as cofactor.

The protein localises to the cell membrane. The catalysed reaction is (S)-dihydroorotate + a quinone = orotate + a quinol. Its pathway is pyrimidine metabolism; UMP biosynthesis via de novo pathway; orotate from (S)-dihydroorotate (quinone route): step 1/1. Functionally, catalyzes the conversion of dihydroorotate to orotate with quinone as electron acceptor. This is Dihydroorotate dehydrogenase (quinone) from Akkermansia muciniphila (strain ATCC BAA-835 / DSM 22959 / JCM 33894 / BCRC 81048 / CCUG 64013 / CIP 107961 / Muc).